We begin with the raw amino-acid sequence, 54 residues long: UPF0391 membrane protein BAB1_1670 (54 aa).

The next 2 helical transmembrane spans lie at 5–25 (VLVF…GIAG) and 29–48 (GIAQ…SLIA).

This sequence belongs to the UPF0391 family.

It is found in the cell membrane. This chain is UPF0391 membrane protein BAB1_1670, found in Brucella abortus (strain 2308).